The following is a 264-amino-acid chain: Short-chain dehydrogenase/reductase malC (264 aa).

Residues 13–35 (GKNVLIIGGTSGIGFAVAQLVIE) traverse the membrane as a helical segment. 11 residues coordinate NADP(+): Thr22, Ser23, Ile25, Ser45, Asn46, Lys49, Asp75, Asn88, Arg130, Val202, and Thr204. The N-linked (GlcNAc...) asparagine glycan is linked to Asn249.

Belongs to the short-chain dehydrogenases/reductases (SDR) family.

It localises to the membrane. The catalysed reaction is 1-hydroxy-3-{[2-(1,1-dimethylallyl)-indol-3-yl]methyl}-6H,7H,8H-5lambda(5)-pyrrolo[1,2-a]pyrazine + NADPH + H(+) = 1-hydroxy-3-{[2-(1,1-dimethylallyl)-indol-3-yl]methyl}-4H,6H,7H,8H-pyrrolo[1,2-a]pyrazine + NADP(+). The enzyme catalyses 1-hydroxy-3-{[2-(1,1-dimethylallyl)-indol-3-yl]methyl}-4H,6H,7H,8H-pyrrolo[1,2-a]pyrazine = (+)-premalbrancheamide. The protein operates within alkaloid biosynthesis. Functionally, short-chain dehydrogenase/reductase; part of the gene cluster that mediates the biosynthesis of malbrancheamide, a dichlorinated fungal indole alkaloid that belongs to a family of natural products containing a characteristic bicyclo[2.2.2]diazaoctane core. The first step of malbrancheamide biosynthesis involves coupling of L-proline and L-tryptophan by malG, a bimodular NRPS, to produce L-Pro-L-Trp aldehyde through reductive offloading. This compound undergoes spontaneous cyclization and dehydration to give a dienamine which is reverse prenylated at C-2 by malE. The other prenyltransferase present in the cluster, malB, displays modest activity, suggesting that may be a redundant gene in the pathway. Subsequently, a [4+2] Diels-Alder cyclo-addition catalyzed by the bifunctional enzyme malC forms the characteristic bicyclo[2.2.2]diazaoctane ring of premalbrancheamid. The first reaction catalyzed is a NADPH-dependent reduction reaction in which the nicotinamide cofactor is a stoichiometric reagent. Either NADH or NADPH is effective as a cofactor. NADP(+) is required for stereocontrolled formation of premalbrancheamide, however it does not appear to be required as a formal stoichiometric reagent because the second reaction performed by malC, the [4+2] cycloaddition, is a balanced chemical reaction without requirement for hydride transfer to balance the reaction. Finally, the flavin-dependent halogenase malA catalyzes the iterative dichlorination of the indole ring of premalbrancheamide to yield C-9 monochlorinated malbrancheamide B, C-8 monochlorinated isomalbrancheamide B, and dichlorinated malbrancheamide. MalA is also able to brominate premalbrancheamide at C-9 to yield malbrancheamide C, and, to a lesser extend, at C-8 to yield isomalbrancheamide C. Finally, malA can brominate C-9 monochlorinated malbrancheamide B at C-8 to yield malbrancheamide D, or C-8 monochlorinated isomalbrancheamide B at C-9 to produce isomalbrancheamide D. This chain is Short-chain dehydrogenase/reductase malC, found in Malbranchea aurantiaca.